Consider the following 290-residue polypeptide: Alpha-1,2-colitosyltransferase (290 aa).

Belongs to the glycosyltransferase 11 family. It depends on Does not require a metal cofactor. as a cofactor.

The enzyme catalyses GDP-beta-L-colitose + beta-D-galactosyl-(1-&gt;3)-N-acetyl-D-glucosamine = alpha-L-colitosyl-(1-&gt;2)-beta-D-galactosyl-(1-&gt;3)-N-acetyl-D-glucosamine + GDP + H(+). It participates in bacterial outer membrane biogenesis; LPS O-antigen biosynthesis. With respect to regulation, addition of metal ions dramatically decreases the activity to 0-40%. Functionally, involved in the biosynthesis of the lipopolysaccharide (LPS) O-antigen region. Catalyzes the transfer of colitose from GDP-colitose to the galactose residue of beta-Gal-(1-&gt;3)-GlcNAc (lacto-N-biose) via an alpha1,2-linkage. Is specific for beta-Gal-(1-&gt;3)-GlcNAc, but can use GDP-L-fucose as the sugar donor with almost the same efficiency as GDP-L-colitose. This chain is Alpha-1,2-colitosyltransferase, found in Escherichia coli.